Reading from the N-terminus, the 173-residue chain is dCTP deaminase, dUMP-forming (173 aa).

DCTP-binding positions include 93 to 98, aspartate 111, 119 to 121, and glutamine 138; these read RSSIGR and TLE. Glutamate 121 acts as the Proton donor/acceptor in catalysis.

The protein belongs to the dCTP deaminase family. Homotrimer.

The catalysed reaction is dCTP + 2 H2O = dUMP + NH4(+) + diphosphate. Its pathway is pyrimidine metabolism; dUMP biosynthesis; dUMP from dCTP: step 1/1. Bifunctional enzyme that catalyzes both the deamination of dCTP to dUTP and the hydrolysis of dUTP to dUMP without releasing the toxic dUTP intermediate. The polypeptide is dCTP deaminase, dUMP-forming (Leptospira interrogans serogroup Icterohaemorrhagiae serovar copenhageni (strain Fiocruz L1-130)).